We begin with the raw amino-acid sequence, 75 residues long: ATP synthase subunit c (75 aa).

The next 2 helical transmembrane spans lie at 9-29 (IGAG…GIIF) and 54-74 (FALA…ILFA).

It belongs to the ATPase C chain family. F-type ATPases have 2 components, F(1) - the catalytic core - and F(0) - the membrane proton channel. F(1) has five subunits: alpha(3), beta(3), gamma(1), delta(1), epsilon(1). F(0) has three main subunits: a(1), b(2) and c(10-14). The alpha and beta chains form an alternating ring which encloses part of the gamma chain. F(1) is attached to F(0) by a central stalk formed by the gamma and epsilon chains, while a peripheral stalk is formed by the delta and b chains.

The protein localises to the cell inner membrane. Its function is as follows. F(1)F(0) ATP synthase produces ATP from ADP in the presence of a proton or sodium gradient. F-type ATPases consist of two structural domains, F(1) containing the extramembraneous catalytic core and F(0) containing the membrane proton channel, linked together by a central stalk and a peripheral stalk. During catalysis, ATP synthesis in the catalytic domain of F(1) is coupled via a rotary mechanism of the central stalk subunits to proton translocation. Functionally, key component of the F(0) channel; it plays a direct role in translocation across the membrane. A homomeric c-ring of between 10-14 subunits forms the central stalk rotor element with the F(1) delta and epsilon subunits. This is ATP synthase subunit c from Pelagibacter ubique (strain HTCC1062).